Reading from the N-terminus, the 116-residue chain is Large ribosomal subunit protein bL19 (116 aa).

The protein belongs to the bacterial ribosomal protein bL19 family.

This protein is located at the 30S-50S ribosomal subunit interface and may play a role in the structure and function of the aminoacyl-tRNA binding site. The chain is Large ribosomal subunit protein bL19 from Lactobacillus gasseri (strain ATCC 33323 / DSM 20243 / BCRC 14619 / CIP 102991 / JCM 1131 / KCTC 3163 / NCIMB 11718 / NCTC 13722 / AM63).